The following is a 120-amino-acid chain: MITKVDRNAVRKKRHARVRKKIFGTAERPRLNVFRSNKHIYAQIIDDMKAVTIVSASTLDKEFDLESTGNIEAAKKVGELVAKRALEKGIKKVVFDRGGYLYHGRVKALADAAREAGLEF.

This sequence belongs to the universal ribosomal protein uL18 family. As to quaternary structure, part of the 50S ribosomal subunit; part of the 5S rRNA/L5/L18/L25 subcomplex. Contacts the 5S and 23S rRNAs.

Its function is as follows. This is one of the proteins that bind and probably mediate the attachment of the 5S RNA into the large ribosomal subunit, where it forms part of the central protuberance. The polypeptide is Large ribosomal subunit protein uL18 (Geobacillus sp. (strain WCH70)).